Consider the following 388-residue polypeptide: Succinate--CoA ligase [ADP-forming] subunit beta (388 aa).

One can recognise an ATP-grasp domain in the interval 9–244 (KQLFARYGLP…QSQEDPREAQ (236 aa)). ATP is bound by residues K46, 53-55 (GRG), E99, T102, and E107. Residues N199 and D213 each contribute to the Mg(2+) site. Substrate-binding positions include N264 and 321–323 (GIV).

The protein belongs to the succinate/malate CoA ligase beta subunit family. As to quaternary structure, heterotetramer of two alpha and two beta subunits. The cofactor is Mg(2+).

It catalyses the reaction succinate + ATP + CoA = succinyl-CoA + ADP + phosphate. It carries out the reaction GTP + succinate + CoA = succinyl-CoA + GDP + phosphate. It participates in carbohydrate metabolism; tricarboxylic acid cycle; succinate from succinyl-CoA (ligase route): step 1/1. Its function is as follows. Succinyl-CoA synthetase functions in the citric acid cycle (TCA), coupling the hydrolysis of succinyl-CoA to the synthesis of either ATP or GTP and thus represents the only step of substrate-level phosphorylation in the TCA. The beta subunit provides nucleotide specificity of the enzyme and binds the substrate succinate, while the binding sites for coenzyme A and phosphate are found in the alpha subunit. The sequence is that of Succinate--CoA ligase [ADP-forming] subunit beta from Salmonella dublin (strain CT_02021853).